The following is a 425-amino-acid chain: tRNA(Met) cytidine acetate ligase (425 aa).

Residues 7 to 20, G102, N165, and 190 to 191 each bind ATP; these read IVEYNPFHNGHLYH and RI.

This sequence belongs to the TmcAL family.

Its subcellular location is the cytoplasm. The catalysed reaction is cytidine(34) in elongator tRNA(Met) + acetate + ATP = N(4)-acetylcytidine(34) in elongator tRNA(Met) + AMP + diphosphate. Functionally, catalyzes the formation of N(4)-acetylcytidine (ac(4)C) at the wobble position of elongator tRNA(Met), using acetate and ATP as substrates. First activates an acetate ion to form acetyladenylate (Ac-AMP) and then transfers the acetyl group to tRNA to form ac(4)C34. The polypeptide is tRNA(Met) cytidine acetate ligase (Thermosipho melanesiensis (strain DSM 12029 / CIP 104789 / BI429)).